We begin with the raw amino-acid sequence, 117 residues long: uncharacterized protein (117 aa).

A helical transmembrane segment spans residues 4–26; it reads VLNFHFSYIYTYFITITTNYKYG.

It is found in the host membrane. This is an uncharacterized protein from Sulfolobus islandicus rod-shaped virus 1 (SIRV-1).